We begin with the raw amino-acid sequence, 243 residues long: MYIIAHRGASGYAPENTIAAFDLAVKMNADMIELDVQLTKDRQIVVIHDDRVDRTTNGSGFVKDFTLEELQKLDAGSWYGPAFQGERIPTLEAVLKRYHKKIGLLIELKGHPSQVGIEEEVGQLLGQFSFSINNIVQSFQFRSVQRFRELYPSIPTAVITRPNFGMLSRNQMKAFRSFANYVNIKHTRLNRLMIGSINKNGLNIFAWTVNNQKTAAKLQAMGVDGIVTDYPDFIIKDGKHENI.

Positions 1–238 constitute a GP-PDE domain; the sequence is MYIIAHRGAS…DYPDFIIKDG (238 aa). Residue His6 is the Proton acceptor of the active site. Glu33 and Asp35 together coordinate Ca(2+). The active-site Proton donor is His48. Glu107 provides a ligand contact to Ca(2+).

Belongs to the glycerophosphoryl diester phosphodiesterase family. Requires Ca(2+) as cofactor.

It carries out the reaction a sn-glycero-3-phosphodiester + H2O = an alcohol + sn-glycerol 3-phosphate + H(+). Functionally, glycerophosphodiester phosphodiesterase hydrolyzes glycerophosphodiesters into glycerol-3-phosphate (G3P) and the corresponding alcohol. This chain is Putative glycerophosphodiester phosphodiesterase YhdW (yhdW), found in Bacillus subtilis (strain 168).